The chain runs to 200 residues: MLSYLSGTLIEKFSTEIVVEVNGVGYLLNISATTHEKLPAIGNQIKILTYLYVREDALQLYGFITTEDREVFKLLIAISGVGPKLAQTILSGMSTAQLRESVIAGDTKALTAIAGVGKKTAERIILELKDKLVKLDLKIDIKETAFRSDKQQVRNDAYSALISLGFTKSIAEKAMRAAIAEVPDGSVDDLIRVALRHVQS.

Residues 1-64 (MLSYLSGTLI…EDALQLYGFI (64 aa)) form a domain I region. Residues 65–143 (TTEDREVFKL…KLDLKIDIKE (79 aa)) are domain II. Residues 144-148 (TAFRS) are flexible linker. The interval 149–200 (DKQQVRNDAYSALISLGFTKSIAEKAMRAAIAEVPDGSVDDLIRVALRHVQS) is domain III.

It belongs to the RuvA family. In terms of assembly, homotetramer. Forms an RuvA(8)-RuvB(12)-Holliday junction (HJ) complex. HJ DNA is sandwiched between 2 RuvA tetramers; dsDNA enters through RuvA and exits via RuvB. An RuvB hexamer assembles on each DNA strand where it exits the tetramer. Each RuvB hexamer is contacted by two RuvA subunits (via domain III) on 2 adjacent RuvB subunits; this complex drives branch migration. In the full resolvosome a probable DNA-RuvA(4)-RuvB(12)-RuvC(2) complex forms which resolves the HJ.

The protein resides in the cytoplasm. Functionally, the RuvA-RuvB-RuvC complex processes Holliday junction (HJ) DNA during genetic recombination and DNA repair, while the RuvA-RuvB complex plays an important role in the rescue of blocked DNA replication forks via replication fork reversal (RFR). RuvA specifically binds to HJ cruciform DNA, conferring on it an open structure. The RuvB hexamer acts as an ATP-dependent pump, pulling dsDNA into and through the RuvAB complex. HJ branch migration allows RuvC to scan DNA until it finds its consensus sequence, where it cleaves and resolves the cruciform DNA. This is Holliday junction branch migration complex subunit RuvA from Chloroherpeton thalassium (strain ATCC 35110 / GB-78).